Reading from the N-terminus, the 78-residue chain is NAD(P)H-quinone oxidoreductase subunit O (78 aa).

The protein belongs to the complex I NdhO subunit family. As to quaternary structure, NDH-1 can be composed of about 15 different subunits; different subcomplexes with different compositions have been identified which probably have different functions.

The protein resides in the cell inner membrane. The enzyme catalyses a plastoquinone + NADH + (n+1) H(+)(in) = a plastoquinol + NAD(+) + n H(+)(out). The catalysed reaction is a plastoquinone + NADPH + (n+1) H(+)(in) = a plastoquinol + NADP(+) + n H(+)(out). Its function is as follows. NDH-1 shuttles electrons from an unknown electron donor, via FMN and iron-sulfur (Fe-S) centers, to quinones in the respiratory and/or the photosynthetic chain. The immediate electron acceptor for the enzyme in this species is believed to be plastoquinone. Couples the redox reaction to proton translocation, and thus conserves the redox energy in a proton gradient. Cyanobacterial NDH-1 also plays a role in inorganic carbon-concentration. This Gloeobacter violaceus (strain ATCC 29082 / PCC 7421) protein is NAD(P)H-quinone oxidoreductase subunit O.